The chain runs to 619 residues: DNA mismatch repair protein MutL (619 aa).

It belongs to the DNA mismatch repair MutL/HexB family.

This protein is involved in the repair of mismatches in DNA. It is required for dam-dependent methyl-directed DNA mismatch repair. May act as a 'molecular matchmaker', a protein that promotes the formation of a stable complex between two or more DNA-binding proteins in an ATP-dependent manner without itself being part of a final effector complex. This is DNA mismatch repair protein MutL from Shewanella frigidimarina (strain NCIMB 400).